An 88-amino-acid polypeptide reads, in one-letter code: Small ribosomal subunit protein bS20 (88 aa).

It belongs to the bacterial ribosomal protein bS20 family.

In terms of biological role, binds directly to 16S ribosomal RNA. The polypeptide is Small ribosomal subunit protein bS20 (Clostridium novyi (strain NT)).